The following is a 366-amino-acid chain: Transaldolase (366 aa).

The Schiff-base intermediate with substrate role is filled by lysine 140.

The protein belongs to the transaldolase family. Type 2 subfamily.

It is found in the cytoplasm. It carries out the reaction D-sedoheptulose 7-phosphate + D-glyceraldehyde 3-phosphate = D-erythrose 4-phosphate + beta-D-fructose 6-phosphate. It participates in carbohydrate degradation; pentose phosphate pathway; D-glyceraldehyde 3-phosphate and beta-D-fructose 6-phosphate from D-ribose 5-phosphate and D-xylulose 5-phosphate (non-oxidative stage): step 2/3. Its function is as follows. Transaldolase is important for the balance of metabolites in the pentose-phosphate pathway. The sequence is that of Transaldolase from Saccharopolyspora erythraea (strain ATCC 11635 / DSM 40517 / JCM 4748 / NBRC 13426 / NCIMB 8594 / NRRL 2338).